We begin with the raw amino-acid sequence, 131 residues long: Agouti-signaling protein (131 aa).

A signal peptide spans 1–22 (MDVTRLLLATLVGFLCFLTVHS). Asparagine 39 carries N-linked (GlcNAc...) asparagine glycosylation. The segment at 58–96 (KSKKISRKEAEKRKRSSKKKASIKKVARPPPPSPCVATR) is disordered. The segment covering 70–84 (RKRSSKKKASIKKVA) has biased composition (basic residues). 5 disulfides stabilise this stretch: cysteine 92–cysteine 107, cysteine 99–cysteine 113, cysteine 106–cysteine 124, cysteine 110–cysteine 131, and cysteine 115–cysteine 122. The Agouti domain maps to 92–131 (CVATRDSCKPPAPACCNPCASCQCRFFGSACTCRVLNPNC).

It is found in the secreted. Functionally, involved in the regulation of melanogenesis. The binding of ASP to MC1R precludes alpha-MSH initiated signaling and thus blocks production of cAMP, leading to a down-regulation of eumelanogenesis (brown/black pigment) and thus increasing synthesis of pheomelanin (yellow/red pigment). The polypeptide is Agouti-signaling protein (Rattus norvegicus (Rat)).